We begin with the raw amino-acid sequence, 656 residues long: Protein EMBRYO SAC DEVELOPMENT ARREST 30 (656 aa).

Residues 9 to 29 traverse the membrane as a helical; Signal-anchor for type II membrane protein segment; it reads WIALFVLILSMGSLVVHLSMT. Asparagine 119 carries N-linked (GlcNAc...) asparagine glycosylation. A disordered region spans residues 381-426; the sequence is LSELVGPETPLPENTYKMPPRKSDKQLKEEWNKAGPRPRPLPPPPD. The span at 401-412 shows a compositional bias: basic and acidic residues; it reads RKSDKQLKEEWN. The segment covering 417 to 426 has biased composition (pro residues); sequence RPRPLPPPPD. Asparagine 444, asparagine 522, asparagine 534, and asparagine 544 each carry an N-linked (GlcNAc...) asparagine glycan. The tract at residues 631-656 is disordered; it reads SETEEEFAKSKVASAFDQDEEWDPND. The span at 647 to 656 shows a compositional bias: acidic residues; sequence DQDEEWDPND.

Belongs to the glycosyltransferase GT106 family.

It is found in the membrane. Its pathway is glycan metabolism. The polypeptide is Protein EMBRYO SAC DEVELOPMENT ARREST 30 (Arabidopsis thaliana (Mouse-ear cress)).